Consider the following 642-residue polypeptide: Chaperone protein HtpG (642 aa).

Positions 1-350 (MATDTQKETL…SNDLSLNVSR (350 aa)) are a; substrate-binding. Residues 351–567 (EILQNDHAVD…EYDMGLQMRR (217 aa)) form a b region. Residues 568-642 (LLEQAGQKLP…MNKLIVQLSK (75 aa)) are c.

Belongs to the heat shock protein 90 family. As to quaternary structure, homodimer.

It localises to the cytoplasm. Its function is as follows. Molecular chaperone. Has ATPase activity. The polypeptide is Chaperone protein HtpG (Marinomonas sp. (strain MWYL1)).